Consider the following 455-residue polypeptide: La-related protein 6C (455 aa).

The segment covering 1-20 has biased composition (basic and acidic residues); that stretch reads MAQMQREEVESVTTEKKRLD. The tract at residues 1–29 is disordered; the sequence is MAQMQREEVESVTTEKKRLDGGGGSSGAQ. Positions 138–229 constitute an HTH La-type RNA-binding domain; it reads NLLSDDLRLK…KRTSQFTDRD (92 aa). The RRM domain maps to 236–324; that stretch reads RTVVAENLPD…KGLRVRLLLR (89 aa). Disordered stretches follow at residues 348-396 and 414-455; these read SYES…YAVG and SLGS…PNNL.

The protein localises to the nucleus. Functionally, transcriptional regulator. In Arabidopsis thaliana (Mouse-ear cress), this protein is La-related protein 6C (LARP6C).